We begin with the raw amino-acid sequence, 63 residues long: Beta-insect depressant toxin Im-3 (63 aa).

The region spanning 1 to 63 (KEGYGVGKDG…KVWESSTNTC (63 aa)) is the LCN-type CS-alpha/beta domain. Cystine bridges form between C11–C63, C15–C37, C22–C44, and C26–C46.

Belongs to the long (4 C-C) scorpion toxin superfamily. Sodium channel inhibitor family. Beta subfamily. As to expression, expressed by the venom gland.

It is found in the secreted. In terms of biological role, beta toxins bind voltage-independently at site-4 of sodium channels (Nav) and shift the voltage of activation toward more negative potentials thereby affecting sodium channel activation and promoting spontaneous and repetitive firing. Induces paralysis in cricket A.domestica but does not induce death. The protein is Beta-insect depressant toxin Im-3 of Isometrus maculatus (Lesser brown scorpion).